A 103-amino-acid chain; its full sequence is Large ribosomal subunit protein bL21 (103 aa).

The protein belongs to the bacterial ribosomal protein bL21 family. As to quaternary structure, part of the 50S ribosomal subunit. Contacts protein L20.

This protein binds to 23S rRNA in the presence of protein L20. In Legionella pneumophila (strain Lens), this protein is Large ribosomal subunit protein bL21.